The chain runs to 864 residues: DNA mismatch repair protein MutS (864 aa).

621–628 (GPNMGGKS) provides a ligand contact to ATP. A disordered region spans residues 804–833 (ETGKPESPAPVASRSSKPSMQADMFAEPQP).

It belongs to the DNA mismatch repair MutS family.

Functionally, this protein is involved in the repair of mismatches in DNA. It is possible that it carries out the mismatch recognition step. This protein has a weak ATPase activity. The polypeptide is DNA mismatch repair protein MutS (Teredinibacter turnerae (strain ATCC 39867 / T7901)).